Here is a 351-residue protein sequence, read N- to C-terminus: Centromere-binding protein 1 (351 aa).

M1 carries the post-translational modification N-acetylmethionine. Composition is skewed to polar residues over residues 1–10 (MNSLANNNKL), 43–52 (LLSQESNDGN), and 65–77 (KGTQ…GLTS). Disordered regions lie at residues 1 to 164 (MNSL…TQQS), 196 to 233 (KKDI…VERR), and 327 to 351 (YEDM…PHEA). S45 bears the Phosphoserine; by ATM or ATR mark. S48 is modified (phosphoserine). S84 carries the phosphoserine modification. Composition is skewed to polar residues over residues 100-124 (VNYT…TNAN) and 138-164 (TPSN…TQQS). The residue at position 138 (T138) is a Phosphothreonine. A bHLH domain is found at 222–270 (QRKDSHKEVERRRRENINTAINVLSDLLPVRESSKAAILACAAEYIQKL).

As to quaternary structure, binds DNA as a dimer. Associates with MET4 to form a heteromeric complex which also includes MET28.

Its subcellular location is the nucleus. It localises to the mitochondrion. The protein localises to the chromosome. The protein resides in the centromere. Required for chromosome stability and methionine prototrophy. It is involved in chromosomal segregation. Binds to a highly conserved DNA sequence (5'-RTCACRTG-3'), called CDEI, found in centromeres and in several promoters. DNA-binding activity is enhanced by MET28. Required as an auxiliary factor for transcriptional activation of sulfur metabolism together with MET4 and MET28. In Saccharomyces cerevisiae (strain ATCC 204508 / S288c) (Baker's yeast), this protein is Centromere-binding protein 1 (CBF1).